Reading from the N-terminus, the 377-residue chain is MENLSSACTHFSFDLFRKINENNATGNVFFSPISISTALAMVLLGARGNTAQQISRILHFDAVKDLHSNFQTLNAEINKKNVSSYALNLANRLFGEKSFKFLPDFLSSVKKQYNADLGTVDFISAAEDARKEINTWVSEQTKGKIPEVLSAGAVNSFTKLVLVNAIYFKGDWAKKFKAEHTKDMPFQLNKKEQKTVKMMYQMEKLPFNYIPEINCRVLELPYVDYELSMVIVLPDNINDDTTGLQQLEKELSLEKINEWTENMMPIDVHVHLPKFKLEDSYKLKSQLAGMGMADLFEAGSADLSGMSGSNDLYLSEVIHKSFVEVNEEGTEAAAASAGIAMMCLMREEEFNANHPFLFFIRHNATKSILFFGRYSSP.

Methionine 1 is modified (N-acetylmethionine).

Belongs to the serpin family. Ov-serpin subfamily.

Its subcellular location is the cytoplasm. Regulates the activity of the neutrophil proteases. The polypeptide is Leukocyte elastase inhibitor (serpinb1) (Xenopus tropicalis (Western clawed frog)).